Here is a 299-residue protein sequence, read N- to C-terminus: tRNA dimethylallyltransferase (299 aa).

13-20 serves as a coordination point for ATP; it reads GPTASGKT. Position 15-20 (15-20) interacts with substrate; the sequence is TASGKT. The interval 38 to 41 is interaction with substrate tRNA; it reads DSRQ.

The protein belongs to the IPP transferase family. As to quaternary structure, monomer. The cofactor is Mg(2+).

The enzyme catalyses adenosine(37) in tRNA + dimethylallyl diphosphate = N(6)-dimethylallyladenosine(37) in tRNA + diphosphate. Functionally, catalyzes the transfer of a dimethylallyl group onto the adenine at position 37 in tRNAs that read codons beginning with uridine, leading to the formation of N6-(dimethylallyl)adenosine (i(6)A). The chain is tRNA dimethylallyltransferase from Prochlorococcus marinus (strain AS9601).